A 909-amino-acid chain; its full sequence is Short transient receptor potential channel 3 (909 aa).

Residues 1–92 (MSTKVKKCRE…VRGPAFMFGA (92 aa)) are disordered. Topologically, residues 1–447 (MSTKVKKCRE…KILRSPFMKF (447 aa)) are cytoplasmic. The span at 19 to 28 (PEEEDGEAEG) shows a compositional bias: acidic residues. Pro residues predominate over residues 47-57 (PPCPRAPPSPG). The span at 58–67 (PDASSEGSPS) shows a compositional bias: low complexity. 4 ANK repeats span residues 99–128 (AEEERFLDAAEYGNIPVVRKMLEESRTLNV), 134–163 (MGQNALQLAVGNEHLEVTELLLKKENLARI), 165–191 (DALLLAISKGYVRIVEAILGHPGFAAS), and 220–249 (PDITPIILAAHCHKYEVVHLLLLKGARIER). Glu146 provides a ligand contact to Ca(2+). The helical transmembrane segment at 448-465 (VAHAASFIIFLGLLVFNA) threads the bilayer. Topologically, residues 466-496 (SDRFEGITTLPNITVIDYPKQIFRVKTTQFT) are extracellular. N-linked (GlcNAc...) asparagine glycosylation occurs at Asn477. A helical membrane pass occupies residues 497–515 (WTEMLIMVWVLGMMWSECK). Ca(2+) contacts are provided by Glu513, Glu516, and Asn531. Topologically, residues 516 to 528 (ELWLEGPREYIVQ) are cytoplasmic. The chain crosses the membrane as a helical span at residues 529–550 (LWNVLDFGMLSIFIAAFTARFL). The Extracellular segment spans residues 551–594 (AFLQATKAQQYVDSHVQESDLSEVTLPPEVQYFTYARDKWLPSD). Residues 595–618 (PQIISEGLYAIAVVLSFSRIAYIL) form a helical membrane-spanning segment. Residues 619–637 (PANESFGPLQISLGRTVKD) are Cytoplasmic-facing. One copy of the ANK 5 repeat lies at 622-651 (ESFGPLQISLGRTVKDIFKFMVLFIMVFLA). Residues 638 to 661 (IFKFMVLFIMVFLAFMIGMFILYS) traverse the membrane as a helical segment. The Extracellular segment spans residues 662 to 701 (YYLGAKVNPAFTTVEESFKTLFWSIFGLSEVTSVVLKYDH). A helical transmembrane segment spans residues 702–727 (KFIENIGYVLYGIYNVTMVVVLLNML). Residues 728–909 (IAMINSSYQE…KLNPSALRCE (182 aa)) are Cytoplasmic-facing. The Ca(2+) site is built by Glu859, Glu862, Glu864, and Asp871.

This sequence belongs to the transient receptor (TC 1.A.4) family. STrpC subfamily. TRPC3 sub-subfamily. Homotetramer. Interacts with ITPR1, ITPR3, MX1 and RNF24. Interacts with JPH2; the interaction is involved in maintaining Ca(2+) homeostasis in skeletal muscle and is mediated by JPH2 'Ser-165' phosphorylation.

It is found in the cell membrane. The catalysed reaction is Ca(2+)(in) = Ca(2+)(out). Its activity is regulated as follows. Activated by diacylglycerol (DAG) in a membrane-delimited fashion, independently of protein kinase C. Activated by inositol 1,4,5-triphosphate receptors (ITPR) with bound IP3. May be activated by internal calcium store depletion. Inhibited by intracellular Ca(2+). Functionally, forms a receptor-activated non-selective calcium permeant cation channel. May be operated by a phosphatidylinositol second messenger system activated by receptor tyrosine kinases or G-protein coupled receptors. In Rattus norvegicus (Rat), this protein is Short transient receptor potential channel 3 (Trpc3).